We begin with the raw amino-acid sequence, 154 residues long: NADPH-dependent 7-cyano-7-deazaguanine reductase (154 aa).

The active-site Thioimide intermediate is cysteine 54. The active-site Proton donor is the aspartate 61. Residues 76–78 (VES) and 95–96 (HE) contribute to the substrate site.

Belongs to the GTP cyclohydrolase I family. QueF type 1 subfamily.

It is found in the cytoplasm. The enzyme catalyses 7-aminomethyl-7-carbaguanine + 2 NADP(+) = 7-cyano-7-deazaguanine + 2 NADPH + 3 H(+). The protein operates within tRNA modification; tRNA-queuosine biosynthesis. Catalyzes the NADPH-dependent reduction of 7-cyano-7-deazaguanine (preQ0) to 7-aminomethyl-7-deazaguanine (preQ1). In Porphyromonas gingivalis (strain ATCC 33277 / DSM 20709 / CIP 103683 / JCM 12257 / NCTC 11834 / 2561), this protein is NADPH-dependent 7-cyano-7-deazaguanine reductase.